The chain runs to 459 residues: Argininosuccinate lyase (459 aa).

Belongs to the lyase 1 family. Argininosuccinate lyase subfamily.

The protein localises to the cytoplasm. It carries out the reaction 2-(N(omega)-L-arginino)succinate = fumarate + L-arginine. It functions in the pathway amino-acid biosynthesis; L-arginine biosynthesis; L-arginine from L-ornithine and carbamoyl phosphate: step 3/3. This Buchnera aphidicola subsp. Schizaphis graminum (strain Sg) protein is Argininosuccinate lyase.